Here is a 361-residue protein sequence, read N- to C-terminus: Phospho-N-acetylmuramoyl-pentapeptide-transferase (361 aa).

The next 10 helical transmembrane spans lie at isoleucine 27–tryptophan 47, glycine 70–tryptophan 90, serine 97–tyrosine 117, tyrosine 134–leucine 154, threonine 167–serine 187, glycine 199–serine 219, threonine 236–tyrosine 256, valine 263–valine 283, leucine 288–valine 308, and lysine 338–leucine 358.

Belongs to the glycosyltransferase 4 family. MraY subfamily. Mg(2+) is required as a cofactor.

The protein resides in the cell inner membrane. The enzyme catalyses UDP-N-acetyl-alpha-D-muramoyl-L-alanyl-gamma-D-glutamyl-meso-2,6-diaminopimeloyl-D-alanyl-D-alanine + di-trans,octa-cis-undecaprenyl phosphate = di-trans,octa-cis-undecaprenyl diphospho-N-acetyl-alpha-D-muramoyl-L-alanyl-D-glutamyl-meso-2,6-diaminopimeloyl-D-alanyl-D-alanine + UMP. It functions in the pathway cell wall biogenesis; peptidoglycan biosynthesis. Its function is as follows. Catalyzes the initial step of the lipid cycle reactions in the biosynthesis of the cell wall peptidoglycan: transfers peptidoglycan precursor phospho-MurNAc-pentapeptide from UDP-MurNAc-pentapeptide onto the lipid carrier undecaprenyl phosphate, yielding undecaprenyl-pyrophosphoryl-MurNAc-pentapeptide, known as lipid I. The chain is Phospho-N-acetylmuramoyl-pentapeptide-transferase from Legionella pneumophila (strain Lens).